Consider the following 182-residue polypeptide: Lipoprotein signal peptidase (182 aa).

A run of 4 helical transmembrane segments spans residues 12–32 (FLWISALAFILDQWSKYTVID), 40–60 (IQVLPFFNFTYVHNYGAAFSF), 70–90 (WFFTAIAVVVSVVILWWLKQS), and 97–117 (LPVAFAFILGGALGNVYDRLV). Residues D123 and D141 contribute to the active site. A helical transmembrane segment spans residues 136–156 (AFNIADSAIFIGAALLIIDMF). The disordered stretch occupies residues 161 to 182 (KKSEENGAESKAGSANSSETIK). Residues 173–182 (GSANSSETIK) show a composition bias toward polar residues.

Belongs to the peptidase A8 family.

The protein resides in the cell inner membrane. It carries out the reaction Release of signal peptides from bacterial membrane prolipoproteins. Hydrolyzes -Xaa-Yaa-Zaa-|-(S,diacylglyceryl)Cys-, in which Xaa is hydrophobic (preferably Leu), and Yaa (Ala or Ser) and Zaa (Gly or Ala) have small, neutral side chains.. Its pathway is protein modification; lipoprotein biosynthesis (signal peptide cleavage). This protein specifically catalyzes the removal of signal peptides from prolipoproteins. The protein is Lipoprotein signal peptidase of Alteromonas mediterranea (strain DSM 17117 / CIP 110805 / LMG 28347 / Deep ecotype).